Here is a 140-residue protein sequence, read N- to C-terminus: Nucleoside diphosphate kinase (140 aa).

ATP is bound by residues Lys11, Phe59, Arg87, Thr93, Arg104, and Asn114. His117 acts as the Pros-phosphohistidine intermediate in catalysis.

Belongs to the NDK family. As to quaternary structure, homotetramer. Mg(2+) is required as a cofactor.

The protein resides in the cytoplasm. It carries out the reaction a 2'-deoxyribonucleoside 5'-diphosphate + ATP = a 2'-deoxyribonucleoside 5'-triphosphate + ADP. The catalysed reaction is a ribonucleoside 5'-diphosphate + ATP = a ribonucleoside 5'-triphosphate + ADP. Its function is as follows. Major role in the synthesis of nucleoside triphosphates other than ATP. The ATP gamma phosphate is transferred to the NDP beta phosphate via a ping-pong mechanism, using a phosphorylated active-site intermediate. This chain is Nucleoside diphosphate kinase, found in Rhodospirillum rubrum (strain ATCC 11170 / ATH 1.1.1 / DSM 467 / LMG 4362 / NCIMB 8255 / S1).